The chain runs to 165 residues: uncharacterized protein (165 aa).

Helical transmembrane passes span 7 to 27 and 141 to 161; these read LWLA…QITV and KGTP…IALL.

Its subcellular location is the cell membrane. This is an uncharacterized protein from Archaeoglobus fulgidus (strain ATCC 49558 / DSM 4304 / JCM 9628 / NBRC 100126 / VC-16).